Reading from the N-terminus, the 462-residue chain is Argininosuccinate lyase (462 aa).

Belongs to the lyase 1 family. Argininosuccinate lyase subfamily.

The protein localises to the cytoplasm. The enzyme catalyses 2-(N(omega)-L-arginino)succinate = fumarate + L-arginine. It participates in amino-acid biosynthesis; L-arginine biosynthesis; L-arginine from L-ornithine and carbamoyl phosphate: step 3/3. This is Argininosuccinate lyase from Methylobacterium nodulans (strain LMG 21967 / CNCM I-2342 / ORS 2060).